The following is a 671-amino-acid chain: Major S-layer protein (671 aa).

The signal sequence occupies residues 1-24; it reads MKRFAALSLAALMLLTVFASAASA. N-linked (GlcNAc...) asparagine glycosylation is found at Asn-36, Asn-70, Asn-116, and Asn-350. The segment at 594-650 is disordered; that stretch reads GEEVSGEEETPEETPTGEVTETEGEEETPTEVTETPTEGEPAPEETETTESEGTTPG. Acidic residues predominate over residues 613 to 622; the sequence is TETEGEEETP. Over residues 623–633 the composition is skewed to low complexity; it reads TEVTETPTEGE. A compositionally biased stretch (acidic residues) spans 634–643; that stretch reads PAPEETETTE. A helical membrane pass occupies residues 647-667; it reads TTPGFGFMFGLVGLLAVVYLV.

This sequence belongs to the Methanosarcinales S-layer protein family. In terms of processing, glycosylated.

The protein resides in the secreted. It localises to the cell wall. Its subcellular location is the S-layer. It is found in the cell membrane. In terms of biological role, S-layer protein. The S-layer is a paracrystalline mono-layered assembly of proteins which coat the surface of the cell. The polypeptide is Major S-layer protein (Methanosarcina acetivorans (strain ATCC 35395 / DSM 2834 / JCM 12185 / C2A)).